A 157-amino-acid chain; its full sequence is Crossover junction endodeoxyribonuclease RuvC (157 aa).

Active-site residues include Asp7, Glu67, and Asp140. Asp7, Glu67, and Asp140 together coordinate Mg(2+).

This sequence belongs to the RuvC family. In terms of assembly, homodimer which binds Holliday junction (HJ) DNA. The HJ becomes 2-fold symmetrical on binding to RuvC with unstacked arms; it has a different conformation from HJ DNA in complex with RuvA. In the full resolvosome a probable DNA-RuvA(4)-RuvB(12)-RuvC(2) complex forms which resolves the HJ. Mg(2+) serves as cofactor.

The protein localises to the cytoplasm. It carries out the reaction Endonucleolytic cleavage at a junction such as a reciprocal single-stranded crossover between two homologous DNA duplexes (Holliday junction).. In terms of biological role, the RuvA-RuvB-RuvC complex processes Holliday junction (HJ) DNA during genetic recombination and DNA repair. Endonuclease that resolves HJ intermediates. Cleaves cruciform DNA by making single-stranded nicks across the HJ at symmetrical positions within the homologous arms, yielding a 5'-phosphate and a 3'-hydroxyl group; requires a central core of homology in the junction. The consensus cleavage sequence is 5'-(A/T)TT(C/G)-3'. Cleavage occurs on the 3'-side of the TT dinucleotide at the point of strand exchange. HJ branch migration catalyzed by RuvA-RuvB allows RuvC to scan DNA until it finds its consensus sequence, where it cleaves and resolves the cruciform DNA. In Rickettsia typhi (strain ATCC VR-144 / Wilmington), this protein is Crossover junction endodeoxyribonuclease RuvC.